Consider the following 135-residue polypeptide: Early nodulin-5 (135 aa).

Positions 1–23 are cleaved as a signal peptide; the sequence is MASSSSPIFLMIIFSMWLLFSYS.

Invasion zone and early symbiotic zone.

In terms of biological role, involved in the infection process during the plant-rhizobium interaction. In Pisum sativum (Garden pea), this protein is Early nodulin-5 (ENOD5).